The primary structure comprises 460 residues: Omega-3 fatty acid desaturase, chloroplastic (460 aa).

The short motif at 177-181 (HDCGH) is the Histidine box-1 element. The Histidine box-2 signature appears at 213 to 217 (HRTHH). Residues 380–384 (HVIHH) carry the Histidine box-3 motif.

Belongs to the fatty acid desaturase type 1 family.

It is found in the plastid. The protein resides in the chloroplast membrane. The protein operates within lipid metabolism; polyunsaturated fatty acid biosynthesis. Chloroplast omega-3 fatty acid desaturase introduces the third double bond in the biosynthesis of 16:3 and 18:3 fatty acids, important constituents of plant membranes. It is thought to use ferredoxin as an electron donor and to act on fatty acids esterified to galactolipids, sulfolipids and phosphatidylglycerol. The protein is Omega-3 fatty acid desaturase, chloroplastic (FAD7A-1) of Ricinus communis (Castor bean).